A 248-amino-acid polypeptide reads, in one-letter code: Triosephosphate isomerase (248 aa).

Substrate-binding residues include N10 and K12. H95 acts as the Electrophile in catalysis. E165 functions as the Proton acceptor in the catalytic mechanism.

This sequence belongs to the triosephosphate isomerase family. In terms of assembly, homodimer.

It catalyses the reaction D-glyceraldehyde 3-phosphate = dihydroxyacetone phosphate. The protein operates within carbohydrate biosynthesis; gluconeogenesis. Its pathway is carbohydrate degradation; glycolysis; D-glyceraldehyde 3-phosphate from glycerone phosphate: step 1/1. This Zygosaccharomyces bailii protein is Triosephosphate isomerase (TPI1).